The following is a 457-amino-acid chain: Cysteine--tRNA ligase (457 aa).

Cys28 provides a ligand contact to Zn(2+). A 'HIGH' region motif is present at residues 30–40 (MTVYDLCHIGH). The Zn(2+) site is built by Cys209, His234, and Glu238. Residues 266-270 (KMSKS) carry the 'KMSKS' region motif. Lys269 contributes to the ATP binding site.

The protein belongs to the class-I aminoacyl-tRNA synthetase family. Monomer. The cofactor is Zn(2+).

It is found in the cytoplasm. The enzyme catalyses tRNA(Cys) + L-cysteine + ATP = L-cysteinyl-tRNA(Cys) + AMP + diphosphate. The polypeptide is Cysteine--tRNA ligase (Chromobacterium violaceum (strain ATCC 12472 / DSM 30191 / JCM 1249 / CCUG 213 / NBRC 12614 / NCIMB 9131 / NCTC 9757 / MK)).